The primary structure comprises 383 residues: Chorismate synthase (383 aa).

Positions 39 and 45 each coordinate NADP(+). Residues 127-129 (RAS), 249-250 (QS), Gly294, 309-313 (KPIPT), and Arg335 each bind FMN.

Belongs to the chorismate synthase family. Homotetramer. Requires FMNH2 as cofactor.

It catalyses the reaction 5-O-(1-carboxyvinyl)-3-phosphoshikimate = chorismate + phosphate. The protein operates within metabolic intermediate biosynthesis; chorismate biosynthesis; chorismate from D-erythrose 4-phosphate and phosphoenolpyruvate: step 7/7. Its function is as follows. Catalyzes the anti-1,4-elimination of the C-3 phosphate and the C-6 proR hydrogen from 5-enolpyruvylshikimate-3-phosphate (EPSP) to yield chorismate, which is the branch point compound that serves as the starting substrate for the three terminal pathways of aromatic amino acid biosynthesis. This reaction introduces a second double bond into the aromatic ring system. The sequence is that of Chorismate synthase from Caldicellulosiruptor bescii (strain ATCC BAA-1888 / DSM 6725 / KCTC 15123 / Z-1320) (Anaerocellum thermophilum).